Reading from the N-terminus, the 447-residue chain is N-succinylarginine dihydrolase (447 aa).

Substrate is bound by residues alanine 19–serine 28, asparagine 110, and histidine 137–arginine 138. The active site involves glutamate 174. Arginine 212 serves as a coordination point for substrate. Histidine 248 is a catalytic residue. Positions 250 and 359 each coordinate substrate. Cysteine 365 serves as the catalytic Nucleophile.

It belongs to the succinylarginine dihydrolase family. In terms of assembly, homodimer.

The enzyme catalyses N(2)-succinyl-L-arginine + 2 H2O + 2 H(+) = N(2)-succinyl-L-ornithine + 2 NH4(+) + CO2. Its pathway is amino-acid degradation; L-arginine degradation via AST pathway; L-glutamate and succinate from L-arginine: step 2/5. Functionally, catalyzes the hydrolysis of N(2)-succinylarginine into N(2)-succinylornithine, ammonia and CO(2). This is N-succinylarginine dihydrolase from Salmonella typhi.